The chain runs to 117 residues: Large ribosomal subunit protein bL20 (117 aa).

Belongs to the bacterial ribosomal protein bL20 family.

Binds directly to 23S ribosomal RNA and is necessary for the in vitro assembly process of the 50S ribosomal subunit. It is not involved in the protein synthesizing functions of that subunit. The polypeptide is Large ribosomal subunit protein bL20 (Mesomycoplasma hyopneumoniae (strain 232) (Mycoplasma hyopneumoniae)).